Here is a 50-residue protein sequence, read N- to C-terminus: Acidic phospholipase A2 1 (50 aa).

Residues Y27, G29, and G31 each contribute to the Ca(2+) site. C28 and C44 are disulfide-bonded. H47 is a catalytic residue. A Ca(2+)-binding site is contributed by D48.

It belongs to the phospholipase A2 family. Group II subfamily. D49 sub-subfamily. As to quaternary structure, monomer. Requires Ca(2+) as cofactor. Expressed by the venom gland.

Its subcellular location is the secreted. The enzyme catalyses a 1,2-diacyl-sn-glycero-3-phosphocholine + H2O = a 1-acyl-sn-glycero-3-phosphocholine + a fatty acid + H(+). In terms of biological role, snake venom phospholipase A2 (PLA2) that displays a potent enzymatic activity as measured by indirect hemolysis of red blood cells. Is neither lethal when injected into mice nor does it present anticoagulant activity. Displays a moderate inhibitory activity on the aggregation of platelets induced by low levels of ADP, thrombin and arachidonate. In contrast, strongly inhibits platelet aggregation induced by high doses of collagen. Shows myotoxic activity, increases the plasma creatine-kinase activity and induces edema and myonecrosis of mouse skeletal muscles. PLA2 catalyzes the calcium-dependent hydrolysis of the 2-acyl groups in 3-sn-phosphoglycerides. The protein is Acidic phospholipase A2 1 of Lachesis muta muta (Bushmaster).